Reading from the N-terminus, the 667-residue chain is Heat shock protein DDB_G0283913 (667 aa).

2 consecutive transmembrane segments (helical) span residues Phe-2–Leu-22 and Met-224–Leu-244. Positions Ile-18–Ile-82 form a coiled coil. The interval Ile-432–Ala-478 is disordered. Residues Ser-444–Ser-457 are compositionally biased toward low complexity. Residues Ile-463–Glu-477 show a composition bias toward basic and acidic residues. The sHSP domain occupies Met-551–Gly-667.

This sequence belongs to the small heat shock protein (HSP20) family.

The protein localises to the membrane. This is Heat shock protein DDB_G0283913 from Dictyostelium discoideum (Social amoeba).